Reading from the N-terminus, the 338-residue chain is RNA 3'-terminal phosphate cyclase (338 aa).

ATP contacts are provided by residues glutamine 103 and 283–287; that span reads YLADQ. Histidine 308 serves as the catalytic Tele-AMP-histidine intermediate.

It belongs to the RNA 3'-terminal cyclase family. Type 1 subfamily.

The protein localises to the cytoplasm. The catalysed reaction is a 3'-end 3'-phospho-ribonucleotide-RNA + ATP = a 3'-end 2',3'-cyclophospho-ribonucleotide-RNA + AMP + diphosphate. Its function is as follows. Catalyzes the conversion of 3'-phosphate to a 2',3'-cyclic phosphodiester at the end of RNA. The mechanism of action of the enzyme occurs in 3 steps: (A) adenylation of the enzyme by ATP; (B) transfer of adenylate to an RNA-N3'P to produce RNA-N3'PP5'A; (C) and attack of the adjacent 2'-hydroxyl on the 3'-phosphorus in the diester linkage to produce the cyclic end product. The biological role of this enzyme is unknown but it is likely to function in some aspects of cellular RNA processing. In Shigella boydii serotype 18 (strain CDC 3083-94 / BS512), this protein is RNA 3'-terminal phosphate cyclase.